A 316-amino-acid chain; its full sequence is Biotin synthase (316 aa).

The 229-residue stretch at 36-264 folds into the Radical SAM core domain; sequence TEIQISTLLS…ASRVRLAAGR (229 aa). Residues Cys-51, Cys-55, and Cys-58 each contribute to the [4Fe-4S] cluster site. Positions 96, 127, 187, and 259 each coordinate [2Fe-2S] cluster.

This sequence belongs to the radical SAM superfamily. Biotin synthase family. In terms of assembly, homodimer. It depends on [4Fe-4S] cluster as a cofactor. The cofactor is [2Fe-2S] cluster.

The enzyme catalyses (4R,5S)-dethiobiotin + (sulfur carrier)-SH + 2 reduced [2Fe-2S]-[ferredoxin] + 2 S-adenosyl-L-methionine = (sulfur carrier)-H + biotin + 2 5'-deoxyadenosine + 2 L-methionine + 2 oxidized [2Fe-2S]-[ferredoxin]. It functions in the pathway cofactor biosynthesis; biotin biosynthesis; biotin from 7,8-diaminononanoate: step 2/2. In terms of biological role, catalyzes the conversion of dethiobiotin (DTB) to biotin by the insertion of a sulfur atom into dethiobiotin via a radical-based mechanism. The chain is Biotin synthase from Gluconacetobacter diazotrophicus (strain ATCC 49037 / DSM 5601 / CCUG 37298 / CIP 103539 / LMG 7603 / PAl5).